Consider the following 637-residue polypeptide: DEAD-box ATP-dependent RNA helicase 37 (637 aa).

Disordered stretches follow at residues 1 to 68 (MRSS…QPSA) and 86 to 141 (GPAS…EEAT). Composition is skewed to low complexity over residues 10–28 (ANAE…PVAN) and 46–68 (GQAP…QPSA). The span at 104-116 (GGRGGGGGGGGGW) shows a compositional bias: gly residues. Residues 174-202 (NTFAEIDLGDALNENIRRCKYVKPTPVQR) carry the Q motif motif. The region spanning 205–389 (IPISIAGRDL…SDFLADYIFL (185 aa)) is the Helicase ATP-binding domain. An ATP-binding site is contributed by 218–225 (AQTGSGKT). The short motif at 333–336 (DEAD) is the DEAD box element. One can recognise a Helicase C-terminal domain in the interval 416-567 (YLMDLLHAQK…EVPQWLERYS (152 aa)). The tract at residues 570 to 610 (SSFGGGGGRNRRSGGARFGGRDFRRDNRGGGGGGYGGGGGG) is disordered. Residues 588-597 (GGRDFRRDNR) show a composition bias toward basic and acidic residues. Over residues 598–610 (GGGGGGYGGGGGG) the composition is skewed to gly residues.

It belongs to the DEAD box helicase family. DDX3/DED1 subfamily.

It carries out the reaction ATP + H2O = ADP + phosphate + H(+). In Oryza sativa subsp. japonica (Rice), this protein is DEAD-box ATP-dependent RNA helicase 37 (PL10A).